The chain runs to 378 residues: Succinyl-diaminopimelate desuccinylase (378 aa).

Residue His-68 coordinates Zn(2+). Asp-70 is an active-site residue. Asp-101 is a Zn(2+) binding site. The Proton acceptor role is filled by Glu-135. Glu-136, Glu-164, and His-350 together coordinate Zn(2+).

Belongs to the peptidase M20A family. DapE subfamily. As to quaternary structure, homodimer. The cofactor is Zn(2+). It depends on Co(2+) as a cofactor.

The enzyme catalyses N-succinyl-(2S,6S)-2,6-diaminopimelate + H2O = (2S,6S)-2,6-diaminopimelate + succinate. Its pathway is amino-acid biosynthesis; L-lysine biosynthesis via DAP pathway; LL-2,6-diaminopimelate from (S)-tetrahydrodipicolinate (succinylase route): step 3/3. In terms of biological role, catalyzes the hydrolysis of N-succinyl-L,L-diaminopimelic acid (SDAP), forming succinate and LL-2,6-diaminopimelate (DAP), an intermediate involved in the bacterial biosynthesis of lysine and meso-diaminopimelic acid, an essential component of bacterial cell walls. This chain is Succinyl-diaminopimelate desuccinylase, found in Acinetobacter baumannii (strain ATCC 17978 / DSM 105126 / CIP 53.77 / LMG 1025 / NCDC KC755 / 5377).